The chain runs to 291 residues: MEVNGTANILSSAFLAVEFVDSFLPQNPLQEPFKHAWNHMLQNYTKFQIATWGSLIVHELIYFLFCLPGFIFQFLPFMQKYKIQPDKPETWEKQWKCFKMLLFNHFCIQLPLICGTYYFTEFFSIPYDWDTMPRWPFLLAQCFGCAVIEDTWHYFLHRALHHRRIYKYIHKVHHDFTSPFGMQAEYAHPLETLILGAGFFIGTMVFCNHMILLWAWVTFRLLETIDVHSGYDIPLNPLHLIPFYAGARFHDFHHMNFVGNYGSTFTWWDRLFDTDSQFNKHYSHHKTAKSD.

The next 2 membrane-spanning stretches (helical) occupy residues Leu-55–Leu-75 and Met-100–Thr-120. The region spanning Cys-145 to Thr-274 is the Fatty acid hydroxylase domain. The short motif at His-157–His-161 is the Histidine box-1 element. Residues His-170 to His-174 carry the Histidine box-2 motif. The chain crosses the membrane as a helical span at residues Phe-199 to Phe-219. Residues Phe-249 to Met-255 carry the Histidine box-3 motif.

The protein belongs to the sterol desaturase family. It depends on Fe cation as a cofactor.

It localises to the endoplasmic reticulum membrane. The catalysed reaction is 4,4-dimethyl-5alpha-cholest-7-en-3beta-ol + 6 Fe(II)-[cytochrome b5] + 3 O2 + 5 H(+) = 4alpha-carboxy-4beta-methyl-5alpha-cholest-7-ene-3beta-ol + 6 Fe(III)-[cytochrome b5] + 4 H2O. Its pathway is steroid biosynthesis; zymosterol biosynthesis; zymosterol from lanosterol: step 3/6. In terms of biological role, catalyzes the first step in the removal of the two C-4 methyl groups of 4,4-dimethylzymosterol. The chain is Methylsterol monooxygenase 1 (msmo1) from Danio rerio (Zebrafish).